A 218-amino-acid polypeptide reads, in one-letter code: Enhancer of split M2 protein (218 aa).

A compositionally biased stretch (low complexity) spans 1-25; sequence MYLDTKNLTASSTSALTAATASNSK. 3 disordered regions span residues 1–30, 64–86, and 137–164; these read MYLD…TRRM, NTQQ…KSTP, and GRNC…SSSA. The segment covering 147–163 has biased composition (low complexity); the sequence is SSNINSSSSSSNMNSSS.

In terms of biological role, part of the Notch signaling pathway. In Drosophila melanogaster (Fruit fly), this protein is Enhancer of split M2 protein.